A 484-amino-acid chain; its full sequence is Cholesterol 22-hydroxylase CYP90B27 (484 aa).

Residues 2–22 (ALELILVLSSLIVILIIFFSF) traverse the membrane as a helical segment. Residue C429 participates in heme binding.

This sequence belongs to the cytochrome P450 family. In terms of tissue distribution, expressed in roots.

Its subcellular location is the membrane. The enzyme catalyses cholesterol + reduced [NADPH--hemoprotein reductase] + O2 = (22R)-hydroxycholesterol + oxidized [NADPH--hemoprotein reductase] + H2O + H(+). Its pathway is steroid metabolism; cholesterol metabolism. In terms of biological role, involved in the biosynthesis of steroidal saponins and alkaloids natural products from cholesterol such as spirostane-type saponins and polyphyllins, compounds with pharmacological activity. Catalyzes the C-22 hydroxylation of cholesterol to form 22R-hydroxycholesterol. This is Cholesterol 22-hydroxylase CYP90B27 from Paris polyphylla (Daiswa polyphylla).